A 637-amino-acid chain; its full sequence is Clathrin coat assembly protein AP180A (637 aa).

Residues 1-126 (MTTYFKLVKG…REFGKIKKDY (126 aa)) enclose the ENTH domain. The segment at 555 to 637 (TQNHLQQQQQ…YANNLNLIDM (83 aa)) is disordered. 2 stretches are compositionally biased toward low complexity: residues 560–579 (QQQQ…QPQQ) and 600–622 (QPQN…TQQP). Residues 587 to 637 (AGANPVTNITGTVQPQNFPFYPQQQPQPEQSQTQQPVLGNQYANNLNLIDM) form a clathrin-binding region. A compositionally biased stretch (polar residues) spans 623–637 (VLGNQYANNLNLIDM).

Belongs to the AP180 family. Interacts with PAN1 and the clathrin heavy and light chains CHC1 and CLC1.

It is found in the bud. Its subcellular location is the bud neck. The protein resides in the cell membrane. The protein localises to the cytoplasm. Involved in endocytosis and clathrin cage assembly. The chain is Clathrin coat assembly protein AP180A (YAP1801) from Saccharomyces cerevisiae (strain ATCC 204508 / S288c) (Baker's yeast).